The following is a 276-amino-acid chain: Large ribosomal subunit protein uL2 (276 aa).

Residues threonine 219–arginine 276 are disordered.

The protein belongs to the universal ribosomal protein uL2 family. Part of the 50S ribosomal subunit. Forms a bridge to the 30S subunit in the 70S ribosome.

One of the primary rRNA binding proteins. Required for association of the 30S and 50S subunits to form the 70S ribosome, for tRNA binding and peptide bond formation. It has been suggested to have peptidyltransferase activity; this is somewhat controversial. Makes several contacts with the 16S rRNA in the 70S ribosome. This chain is Large ribosomal subunit protein uL2, found in Alkaliphilus metalliredigens (strain QYMF).